The chain runs to 425 residues: COBRA-like protein 4 (425 aa).

The first 27 residues, 1–27 (MAIGVGGCCAVLLAAALLFSSPATTYA), serve as a signal peptide directing secretion. N-linked (GlcNAc...) asparagine glycosylation is found at Asn-36, Asn-163, Asn-171, Asn-319, and Asn-352.

The protein belongs to the COBRA family.

The sequence is that of COBRA-like protein 4 (BC1L9) from Oryza sativa subsp. japonica (Rice).